Here is a 585-residue protein sequence, read N- to C-terminus: Cytoplasmic polyadenylation element-binding protein 1 (585 aa).

Positions 1-32 (MQHQLKACGDVKTSSRAQQNHRRSTAASAKRS) are disordered. RRM domains are found at residues 251–356 (RKVF…PWRL) and 373–444 (RTVF…HAET). The disordered stretch occupies residues 513-533 (DQTRILPRPPHHPAAHHSHQR). Residues 521–532 (PPHHPAAHHSHQ) are compositionally biased toward basic residues.

Interacts with fbf-1.

In terms of biological role, cytoplasmic polyadenylation element binding protein that binds to and regulates the translation of specific mRNAs. Essential for progression through meiosis. Involved in spermatogenesis. This Caenorhabditis briggsae protein is Cytoplasmic polyadenylation element-binding protein 1 (cpb-1).